We begin with the raw amino-acid sequence, 481 residues long: UDP-N-acetylmuramoyl-L-alanyl-D-glutamate--L-lysine ligase (481 aa).

Residue serine 42 participates in UDP-N-acetyl-alpha-D-muramoyl-L-alanyl-D-glutamate binding. 118-124 serves as a coordination point for ATP; it reads GTKGKTT. Residues glutamine 158, 160–161, serine 187, and arginine 195 each bind UDP-N-acetyl-alpha-D-muramoyl-L-alanyl-D-glutamate; that span reads TT. An N6-carboxylysine modification is found at lysine 229. The L-lysine recognition motif signature appears at 404-407; that stretch reads DDPN.

This sequence belongs to the MurCDEF family. MurE subfamily. Carboxylation is probably crucial for Mg(2+) binding and, consequently, for the gamma-phosphate positioning of ATP.

The protein localises to the cytoplasm. It catalyses the reaction UDP-N-acetyl-alpha-D-muramoyl-L-alanyl-D-glutamate + L-lysine + ATP = UDP-N-acetyl-alpha-D-muramoyl-L-alanyl-gamma-D-glutamyl-L-lysine + ADP + phosphate + H(+). It functions in the pathway cell wall biogenesis; peptidoglycan biosynthesis. Functionally, catalyzes the addition of L-lysine to the nucleotide precursor UDP-N-acetylmuramoyl-L-alanyl-D-glutamate (UMAG) in the biosynthesis of bacterial cell-wall peptidoglycan. In Streptococcus pyogenes serotype M4 (strain MGAS10750), this protein is UDP-N-acetylmuramoyl-L-alanyl-D-glutamate--L-lysine ligase.